The following is a 357-amino-acid chain: UDP-N-acetylglucosamine--N-acetylmuramyl-(pentapeptide) pyrophosphoryl-undecaprenol N-acetylglucosamine transferase (357 aa).

UDP-N-acetyl-alpha-D-glucosamine is bound by residues Thr7–Gly9, Asn119, Arg159, Ser187, Ile241, and Gln286.

It belongs to the glycosyltransferase 28 family. MurG subfamily.

It localises to the cell inner membrane. The catalysed reaction is di-trans,octa-cis-undecaprenyl diphospho-N-acetyl-alpha-D-muramoyl-L-alanyl-D-glutamyl-meso-2,6-diaminopimeloyl-D-alanyl-D-alanine + UDP-N-acetyl-alpha-D-glucosamine = di-trans,octa-cis-undecaprenyl diphospho-[N-acetyl-alpha-D-glucosaminyl-(1-&gt;4)]-N-acetyl-alpha-D-muramoyl-L-alanyl-D-glutamyl-meso-2,6-diaminopimeloyl-D-alanyl-D-alanine + UDP + H(+). The protein operates within cell wall biogenesis; peptidoglycan biosynthesis. Functionally, cell wall formation. Catalyzes the transfer of a GlcNAc subunit on undecaprenyl-pyrophosphoryl-MurNAc-pentapeptide (lipid intermediate I) to form undecaprenyl-pyrophosphoryl-MurNAc-(pentapeptide)GlcNAc (lipid intermediate II). This is UDP-N-acetylglucosamine--N-acetylmuramyl-(pentapeptide) pyrophosphoryl-undecaprenol N-acetylglucosamine transferase from Nitrosomonas europaea (strain ATCC 19718 / CIP 103999 / KCTC 2705 / NBRC 14298).